Consider the following 321-residue polypeptide: HPr kinase/phosphorylase (321 aa).

Residues H143 and K164 contribute to the active site. 158-165 (GKSGVGKS) is a binding site for ATP. S165 is a Mg(2+) binding site. D182 acts as the Proton acceptor; for phosphorylation activity. Proton donor; for dephosphorylation activity in catalysis. Positions 206 to 215 (MEIRGLGILN) are important for the catalytic mechanism of both phosphorylation and dephosphorylation. E207 serves as a coordination point for Mg(2+). R248 is an active-site residue. Residues 269 to 274 (PVRPGR) are important for the catalytic mechanism of dephosphorylation.

The protein belongs to the HPrK/P family. As to quaternary structure, homohexamer. Mg(2+) serves as cofactor.

The catalysed reaction is [HPr protein]-L-serine + ATP = [HPr protein]-O-phospho-L-serine + ADP + H(+). It carries out the reaction [HPr protein]-O-phospho-L-serine + phosphate + H(+) = [HPr protein]-L-serine + diphosphate. Its function is as follows. Catalyzes the ATP- as well as the pyrophosphate-dependent phosphorylation of a specific serine residue in HPr, a phosphocarrier protein of the phosphoenolpyruvate-dependent sugar phosphotransferase system (PTS). HprK/P also catalyzes the pyrophosphate-producing, inorganic phosphate-dependent dephosphorylation (phosphorolysis) of seryl-phosphorylated HPr (P-Ser-HPr). The sequence is that of HPr kinase/phosphorylase from Leptospira interrogans serogroup Icterohaemorrhagiae serovar copenhageni (strain Fiocruz L1-130).